A 565-amino-acid polypeptide reads, in one-letter code: NAD-dependent malic enzyme (565 aa).

The active-site Proton donor is Tyr104. NAD(+) is bound at residue Arg157. The Proton acceptor role is filled by Lys175. A divalent metal cation is bound by residues Glu246, Asp247, and Asp270. 2 residues coordinate NAD(+): Asp270 and Asn418.

This sequence belongs to the malic enzymes family. As to quaternary structure, homotetramer. Mg(2+) is required as a cofactor. It depends on Mn(2+) as a cofactor.

It carries out the reaction (S)-malate + NAD(+) = pyruvate + CO2 + NADH. The catalysed reaction is oxaloacetate + H(+) = pyruvate + CO2. The sequence is that of NAD-dependent malic enzyme from Yersinia pseudotuberculosis serotype O:1b (strain IP 31758).